The chain runs to 332 residues: Putative peptide import ATP-binding protein BMEII0206 (332 aa).

The 251-residue stretch at 11–261 folds into the ABC transporter domain; that stretch reads LEVSNLSVDF…PLHPYTEGLL (251 aa). 47–54 lines the ATP pocket; sequence GESGSGKS.

It belongs to the ABC transporter superfamily. As to quaternary structure, the complex is composed of two ATP-binding proteins (BMEII0205 and BMEII0206), two transmembrane proteins (BMEII0207/BMEII0208 and BMEII0209) and a solute-binding protein (BMEII0210).

Its subcellular location is the cell inner membrane. Its function is as follows. Probably part of an ABC transporter complex that could be involved in peptide import. Probably responsible for energy coupling to the transport system. The protein is Putative peptide import ATP-binding protein BMEII0206 of Brucella melitensis biotype 1 (strain ATCC 23456 / CCUG 17765 / NCTC 10094 / 16M).